Reading from the N-terminus, the 354-residue chain is Clavesin-1 (354 aa).

Residues 118-279 enclose the CRAL-TRIO domain; sequence IKRALIDGFP…EFGGTLPPYD (162 aa). Residues 317 to 354 form a disordered region; it reads RECSPKPMKRSQSVVEAGTLKHEEKGENENTQPLLALD. Residues 335 to 344 are compositionally biased toward basic and acidic residues; it reads TLKHEEKGEN. A compositionally biased stretch (polar residues) spans 345-354; that stretch reads ENTQPLLALD.

Forms a complex with clathrin heavy chain and gamma-adaptin. In terms of tissue distribution, expressed in brain with no expression detected in non-neuronal tissues (at protein level).

It is found in the golgi apparatus. The protein resides in the trans-Golgi network membrane. It localises to the early endosome membrane. The protein localises to the cytoplasmic vesicle. Its subcellular location is the clathrin-coated vesicle. Functionally, required for normal morphology of late endosomes and/or lysosomes in neurons. Binds phosphatidylinositol 3,5-bisphosphate (PtdIns(3,5)P2). The protein is Clavesin-1 of Rattus norvegicus (Rat).